Here is a 352-residue protein sequence, read N- to C-terminus: Keratocan (352 aa).

A signal peptide spans 1–20 (MAGTICFIMWVLFITDTVWS). An LRRNT domain is found at 33–71 (DDWTIHDFECPMECFCPPSFPTALYCENRGLKEIPAIPS). Intrachain disulfides connect Cys42/Cys48 and Cys46/Cys58. LRR repeat units follow at residues 72-93 (RIWY…PFEN), 96-117 (QLRW…KGAL), 122-142 (KLLF…PLPR), 143-164 (SLEQ…TFSN), 167-180 (NLTL…KLVD), 193-213 (NLMQ…RLPA), 214-235 (NTMQ…YFNV), 238-258 (KVAF…PSRG), 263-282 (SILD…RISA), and 283-304 (HLQH…VICP). Asn93 is a glycosylation site (N-linked (GlcNAc...) (keratan sulfate) asparagine). An N-linked (GlcNAc...) (keratan sulfate) asparagine glycan is attached at Asn167. A glycan (N-linked (GlcNAc...) asparagine) is linked at Asn222. Residue Asn298 is glycosylated (N-linked (GlcNAc...) asparagine). Cys303 and Cys343 are oxidised to a cystine.

Belongs to the small leucine-rich proteoglycan (SLRP) family. SLRP class II subfamily. Post-translationally, binds keratan sulfate chains. As to expression, cornea (at protein level). Increased expression in the stroma of keratoconus corneas. Also detected in trachea, and in low levels, in intestine, skeletal muscle, ovary, lung and putamen.

The protein resides in the secreted. The protein localises to the extracellular space. Its subcellular location is the extracellular matrix. Its function is as follows. May be important in developing and maintaining corneal transparency and for the structure of the stromal matrix. This is Keratocan (KERA) from Homo sapiens (Human).